Here is a 384-residue protein sequence, read N- to C-terminus: G protein-coupled receptor 88 (384 aa).

At 1–35 the chain is on the extracellular side; that stretch reads MTNSSSTSTSSTTGGSLLLLCEEEESWAGRRIPVS. N3 carries N-linked (GlcNAc...) asparagine glycosylation. Residues 36–56 traverse the membrane as a helical segment; sequence LLYSGLAIGGTLANGMVIYLV. Topologically, residues 57–73 are cytoplasmic; the sequence is SSFRKLQTTSNAFIVNG. A helical transmembrane segment spans residues 74–94; it reads CAADLSVCALWMPQEAVLGLL. The Extracellular portion of the chain corresponds to 95–116; the sequence is PTGSAEPPADWDGAGGSYRLLR. The chain crosses the membrane as a helical span at residues 117 to 136; the sequence is GGLLGLGLTVSLLSHCLVAL. The Cytoplasmic portion of the chain corresponds to 137–158; it reads NRYLLITRAPATYQALYQRRHT. Residues 159 to 179 traverse the membrane as a helical segment; the sequence is AGMLALSWALALGLVLLLPPW. Over 180–195 the chain is Extracellular; sequence APRPGAAPPRVHYPAL. The chain crosses the membrane as a helical span at residues 196–216; it reads LAAAALLAQTALLLHCYLGIV. Residues 217–285 lie on the Cytoplasmic side of the membrane; sequence RRVRVSVKRV…RAQRRLSGLS (69 aa). A helical membrane pass occupies residues 286–306; that stretch reads VLLLCCVFLLATQPLVWVSLA. Residues 307–310 lie on the Extracellular side of the membrane; it reads SGFS. A helical transmembrane segment spans residues 311–331; the sequence is LPVPWGVQAASWLLCCALSAL. Topologically, residues 332–384 are cytoplasmic; that stretch reads NPLLYTWRNEEFRRSVRSVLPGVGDAAAAAVAATAVPAVSQAQLGTRAAGQHW.

This sequence belongs to the G-protein coupled receptor 1 family. In terms of tissue distribution, expressed predominantly in the striatum.

The protein localises to the cell membrane. It localises to the cell projection. It is found in the cilium membrane. Its subcellular location is the cytoplasm. The protein resides in the nucleus. Orphan G protein-coupled receptor implicated in a large repertoire of behavioral responses that engage motor activities, spatial learning, and emotional processing. May play a role in the regulation of cognitive and motor function. Couples with the heterotrimeric G protein complex of the G(i) subfamily, consisting of GNAI1, GNB1 and GNG2, thereby acting through a G(i)-mediated pathway. Plays a role in the attenuation of D1 dopamine receptor (D1R)-mediated cAMP response in ciliated cells. In non-ciliated cells, involved in the inhibition of the beta-2 adrenergic receptor (B2AR) response. In Homo sapiens (Human), this protein is G protein-coupled receptor 88 (GPR88).